The chain runs to 313 residues: Pyrimidine-specific ribonucleoside hydrolase RihB (313 aa).

The active-site Proton acceptor is Asp-11. Positions 11, 16, and 124 each coordinate Ca(2+). Substrate contacts are provided by Gln-227 and His-239. A Ca(2+)-binding site is contributed by Asp-240.

The protein belongs to the IUNH family. RihB subfamily. In terms of assembly, homotetramer. Ca(2+) serves as cofactor.

The catalysed reaction is a pyrimidine ribonucleoside + H2O = a pyrimidine nucleobase + D-ribose. Hydrolyzes cytidine or uridine to ribose and cytosine or uracil, respectively. Has a clear preference for cytidine over uridine. Strictly specific for ribonucleosides. The polypeptide is Pyrimidine-specific ribonucleoside hydrolase RihB (Escherichia coli O157:H7).